The primary structure comprises 238 residues: Cysteine-rich venom protein (238 aa).

A signal peptide spans 1–19 (MIAFIVLLSLAAVLQQSSG). Residues 20 to 27 (TVDFASES) constitute a propeptide that is removed on maturation. In terms of domain architecture, SCP spans 39-164 (KKHNALRRSV…PTKYLYVCQY (126 aa)). 8 disulfide bridges follow: Cys-75–Cys-153, Cys-92–Cys-165, Cys-148–Cys-162, Cys-184–Cys-191, Cys-187–Cys-196, Cys-200–Cys-233, Cys-209–Cys-227, and Cys-218–Cys-231. Residues 200 to 233 (CKREDDYSNCKSLAEKNKCMEEWMKSKCPASCFC) form the ShKT domain.

This sequence belongs to the CRISP family. Expressed by the venom gland.

Its subcellular location is the secreted. Functionally, blocks olfactory (CNGA2) and retinal (CNGA1) cyclic nucleotide-gated (CNG) ion channel currents. Does not inhibit retinal (CNGA3) currents. It forms high-affinity contacts with the pore turret region and most likely inhibits CNG channel current by blocking the external entrance to the transmembrane pore. Does not affect neither depolarization- nor caffeine-induced contraction arterial smooth muscle. The protein is Cysteine-rich venom protein of Demansia vestigiata (Lesser black whip snake).